The following is a 131-amino-acid chain: Single-stranded DNA-binding protein 2 (131 aa).

The region spanning 1–103 (MYNKVIMIGR…VLASSFQLLE (103 aa)) is the SSB domain. The Important for interaction with partner proteins motif lies at 126–131 (EEELPF).

In terms of assembly, homotetramer.

Functionally, plays an important role in DNA replication, recombination and repair. Binds to ssDNA and to an array of partner proteins to recruit them to their sites of action during DNA metabolism. The protein is Single-stranded DNA-binding protein 2 (ssb2) of Streptococcus agalactiae serotype III (strain NEM316).